Consider the following 803-residue polypeptide: Translation initiation factor IF-2 (803 aa).

Disordered regions lie at residues 95 to 125 and 138 to 178; these read PVVE…EKAE and EVKE…EREE. The span at 111 to 121 shows a compositional bias: polar residues; sequence VPLTSDTTNLN. A compositionally biased stretch (basic and acidic residues) spans 138-155; that stretch reads EVKEEAKKTPSEKKETPK. Residues 156 to 167 are compositionally biased toward basic residues; it reads KGPRKETRRSRK. The span at 168–178 shows a compositional bias: basic and acidic residues; that stretch reads PDKEDKWEREE. Residues 302 to 471 enclose the tr-type G domain; sequence PRAPVVTIMG…LLQAEVLELK (170 aa). The interval 311 to 318 is G1; sequence GHVDHGKT. 311-318 is a GTP binding site; it reads GHVDHGKT. The tract at residues 336–340 is G2; the sequence is GITQH. The segment at 357-360 is G3; it reads DTPG. Residues 357–361 and 411–414 contribute to the GTP site; these read DTPGH and NKID. Residues 411 to 414 are G4; the sequence is NKID. Residues 447–449 are G5; sequence SAK.

It belongs to the TRAFAC class translation factor GTPase superfamily. Classic translation factor GTPase family. IF-2 subfamily.

The protein localises to the cytoplasm. Its function is as follows. One of the essential components for the initiation of protein synthesis. Protects formylmethionyl-tRNA from spontaneous hydrolysis and promotes its binding to the 30S ribosomal subunits. Also involved in the hydrolysis of GTP during the formation of the 70S ribosomal complex. This is Translation initiation factor IF-2 from Coxiella burnetii (strain Dugway 5J108-111).